Reading from the N-terminus, the 193-residue chain is Potassium-transporting ATPase KdpC subunit (193 aa).

The helical transmembrane segment at 7-27 threads the bilayer; it reads PLVVLFVILTAVTGLAYPAVM.

The protein belongs to the KdpC family. The system is composed of three essential subunits: KdpA, KdpB and KdpC.

It is found in the cell inner membrane. Its function is as follows. Part of the high-affinity ATP-driven potassium transport (or Kdp) system, which catalyzes the hydrolysis of ATP coupled with the electrogenic transport of potassium into the cytoplasm. This subunit acts as a catalytic chaperone that increases the ATP-binding affinity of the ATP-hydrolyzing subunit KdpB by the formation of a transient KdpB/KdpC/ATP ternary complex. The chain is Potassium-transporting ATPase KdpC subunit from Burkholderia cenocepacia (strain ATCC BAA-245 / DSM 16553 / LMG 16656 / NCTC 13227 / J2315 / CF5610) (Burkholderia cepacia (strain J2315)).